The following is a 670-amino-acid chain: Solute carrier organic anion transporter family member 1A6 (670 aa).

Over 1 to 20 the chain is Cytoplasmic; it reads MGEPEKRAGTHGIRCFAKIK. The chain crosses the membrane as a helical span at residues 21–40; that stretch reads VFLLALTWAYASKALSATYM. Topologically, residues 41–59 are extracellular; the sequence is NSMLTQIERRFNISTSIVG. N-linked (GlcNAc...) asparagine glycosylation occurs at N52. A helical transmembrane segment spans residues 60–80; that stretch reads LINGSFEVGNLLLIIFVSYFG. The Cytoplasmic segment spans residues 81-86; sequence RKRHRP. A helical membrane pass occupies residues 87–111; the sequence is IMIGIGCAVMGLGCFIISLPHFLMG. The Extracellular portion of the chain corresponds to 112–155; that stretch reads RYEYETTISPTSNLSSNSFLCMENRTQTLKPTQDPAECVKEMKS. N124 and N135 each carry an N-linked (GlcNAc...) asparagine glycan. The helical transmembrane segment at 156–184 threads the bilayer; that stretch reads LMWIYVLVGNIIRGIGETPIMPLGISYIE. The Cytoplasmic portion of the chain corresponds to 185–203; sequence DFAKSENSPFYIGILEVGK. The helical transmembrane segment at 204–224 threads the bilayer; it reads ITGPIAAIWLGSFCATIYVDM. Topologically, residues 225 to 242 are extracellular; that stretch reads GSVNTDDLTITPTDTRCV. Residues 243–267 traverse the membrane as a helical segment; it reads GAWWIGFLVCAGLNILISIPFFFFP. Over 268 to 311 the chain is Cytoplasmic; it reads KTFPKEGPEDMANETKNDEGDKHREKAKEEKRGITKDFFLFMKS. A disordered region spans residues 276-295; sequence EDMANETKNDEGDKHREKAK. Residues 312–333 traverse the membrane as a helical segment; that stretch reads LSCNPIYMLCVLTSVLQVNGFV. Over 334–353 the chain is Extracellular; sequence SIFTFKPKYLEHHYGKSSSE. A helical transmembrane segment spans residues 354–377; the sequence is AIFLMGLYTLPSVCVGYLISGFIM. Residues 378–381 are Cytoplasmic-facing; that stretch reads KKFK. Residues 382–405 form a helical membrane-spanning segment; it reads ITLKKAAFISYCLGMSECLLSLCN. Residues 406 to 513 lie on the Extracellular side of the membrane; it reads FMLTCDNVPI…PDCANKLQYF (108 aa). Residues 433 to 488 enclose the Kazal-like domain; that stretch reads NTVLADCNTRCSCLTKTWDPVCGDNGLAYITPCLAGCEKSVGSGINMVLQDCSCIQ. Cystine bridges form between C439-C469, C445-C465, and C454-C486. N-linked (GlcNAc...) asparagine glycosylation occurs at N492. A helical transmembrane segment spans residues 514–536; the sequence is LIITVFCSFFYSLSLIPGYMIFL. The Cytoplasmic segment spans residues 537–545; that stretch reads RCMKSEEKS. A helical membrane pass occupies residues 546–571; that stretch reads LGIGLQAFCMRILGGILAPIYFGVLI. Topologically, residues 572–605 are extracellular; it reads DRTCLHWGTQKCGEPGACRTYEINSFRSIYLGLP. The helical transmembrane segment at 606-623 threads the bilayer; that stretch reads AALRGSSYLPAFFILRLM. Residues 624–670 are Cytoplasmic-facing; that stretch reads RKFQFPGDINSPVTDHVEMMLTEKESEHTDVHRSPQVENDGELKTKL. S634 is subject to Phosphoserine. The disordered stretch occupies residues 647–670; sequence KESEHTDVHRSPQVENDGELKTKL.

Belongs to the organo anion transporter (TC 2.A.60) family.

It localises to the cell membrane. Functionally, may mediate the Na(+)-independent transport of organic anions. The protein is Solute carrier organic anion transporter family member 1A6 (Slco1a6) of Rattus norvegicus (Rat).